The following is an 87-amino-acid chain: Small polypeptide DEVIL 11 (87 aa).

The span at 1 to 11 (MASSSSLTRSG) shows a compositional bias: polar residues. Residues 1–47 (MASSSSLTRSGSVHLDEKWKLSKKDGGASRITRSSSTSSSSFNGKKQ) are disordered. The segment covering 14–27 (HLDEKWKLSKKDGG) has biased composition (basic and acidic residues). Over residues 29-41 (SRITRSSSTSSSS) the composition is skewed to low complexity. The required for DVL/RTFL small polypeptide activity stretch occupies residues 51–82 (AFTRKCARLVKEQRARFYIMRRCVIMLICWRD). The helical transmembrane segment at 64-80 (RARFYIMRRCVIMLICW) threads the bilayer. Residue Asn-83 is glycosylated (N-linked (GlcNAc...) asparagine).

Belongs to the DVL/RTFL small polypeptides family.

It is found in the cell membrane. Its function is as follows. Small polypeptide acting as a regulatory molecule which coordinates cellular responses required for differentiation, growth and development, probably by restricting polar cell proliferation in lateral organs and coordinating socket cell recruitment and differentiation at trichome sites. In Arabidopsis thaliana (Mouse-ear cress), this protein is Small polypeptide DEVIL 11.